The following is a 126-amino-acid chain: Fluoride-specific ion channel FluC (126 aa).

3 consecutive transmembrane segments (helical) span residues 33–53 (LPLN…VFIV), 64–84 (YSLF…SFAL), and 96–116 (GALA…LIGG). Na(+) contacts are provided by Gly-74 and Thr-77.

This sequence belongs to the fluoride channel Fluc/FEX (TC 1.A.43) family.

The protein resides in the cell membrane. The enzyme catalyses fluoride(in) = fluoride(out). With respect to regulation, na(+) is not transported, but it plays an essential structural role and its presence is essential for fluoride channel function. Functionally, fluoride-specific ion channel. Important for reducing fluoride concentration in the cell, thus reducing its toxicity. The protein is Fluoride-specific ion channel FluC of Nitrosopumilus maritimus (strain SCM1).